The chain runs to 561 residues: V-type proton ATPase catalytic subunit A (561 aa).

ATP is bound at residue 190-197 (GAFGCGKT).

This sequence belongs to the ATPase alpha/beta chains family. V-ATPase is a heteromultimeric enzyme composed of a peripheral catalytic V1 complex (main components: subunits A, B, C, D, E, and F) attached to an integral membrane V0 proton pore complex (main component: the proteolipid protein). As to expression, high expression in the mesocotyl tip of etiolated seedlings compared to the base.

The catalysed reaction is ATP + H2O + 4 H(+)(in) = ADP + phosphate + 5 H(+)(out). In terms of biological role, catalytic subunit of the peripheral V1 complex of vacuolar ATPase. V-ATPase vacuolar ATPase is responsible for acidifying a variety of intracellular compartments in eukaryotic cells. This chain is V-type proton ATPase catalytic subunit A, found in Zea mays (Maize).